The primary structure comprises 490 residues: Mitochondria-eating protein (490 aa).

Residues 112-210 are a coiled coil; it reads IRELSSVHES…RILRDEVSFL (99 aa). Low complexity-rich tracts occupy residues 224 to 241 and 456 to 490; these read SRSPSPLLRRSRSVSPVR and RSSSPVRSRSGSPSRTFMASHSRSPSPGRLSSSRL. Disordered regions lie at residues 224 to 253 and 455 to 490; these read SRSPSPLLRRSRSVSPVRGESPTRAQLTSS and SRSSSPVRSRSGSPSRTFMASHSRSPSPGRLSSSRL.

Belongs to the MIEAP family.

The protein resides in the cytoplasm. Its subcellular location is the mitochondrion outer membrane. The protein localises to the mitochondrion matrix. Key regulator of mitochondrial quality that mediates the repairing or degradation of unhealthy mitochondria in response to mitochondrial damage. Mediator of mitochondrial protein catabolic process (also named MALM) by mediating the degradation of damaged proteins inside mitochondria by promoting the accumulation in the mitochondrial matrix of hydrolases that are characteristic of the lysosomal lumen. Also involved in mitochondrion degradation of damaged mitochondria by promoting the formation of vacuole-like structures (named MIV), which engulf and degrade unhealthy mitochondria by accumulating lysosomes. Binds cardiolipin. May form molecular condensates (non-membrane-bounded organelles) within mitochondria that compartmentalize and promote cardiolipin metabolism. The sequence is that of Mitochondria-eating protein (spata18) from Danio rerio (Zebrafish).